A 427-amino-acid chain; its full sequence is Protein phosphatase methylesterase 1 (427 aa).

The interval 1–49 is disordered; the sequence is MSELQKSFAKAKLAKLPPEAPPFSMHPPRDEDDSESASSTGTVVPSPSR. Residues 36–49 are compositionally biased toward polar residues; sequence SASSTGTVVPSPSR. Active-site residues include S207, D233, and H364. The interval 402–427 is disordered; the sequence is SAAMKQGAEAGAVPPFGRGQGSSHKP.

It belongs to the AB hydrolase superfamily.

The enzyme catalyses [phosphatase 2A protein]-C-terminal L-leucine methyl ester + H2O = [phosphatase 2A protein]-C-terminal L-leucine + methanol + H(+). In terms of biological role, demethylates proteins that have been reversibly carboxymethylated. Demethylates the phosphatase PP2A catalytic subunit. The polypeptide is Protein phosphatase methylesterase 1 (ppe1) (Aspergillus oryzae (strain ATCC 42149 / RIB 40) (Yellow koji mold)).